We begin with the raw amino-acid sequence, 367 residues long: MAIDFPSEISALRTTYASIREVSDLDALRKELADLNDEAAAPSLWDDPEHAQTVTSRLSAVQAELDRIEKMGGRIDDLEVLVELSEDEHDADSLAEAETELNEVKEQLAQLEVRTLLSGEYDSREAIVTIRSEAGGVDAADFAEMLMRMYLRWAERRGYKSEVYDTSYAEEAGIKSATFKVAAPYAYGTLSVEQGTHRLVRISPFDNQGRRQTSFAGVEVLPVVAETDHVDVPENEVRVDVYRSSGPGGQSVNTTDSAVRLTHLPTGIVVTCQNEKSQLQNKAAAMRVLQAKLLEKARKDRQAELDALKGDDSGSWGNQMRSYVLHPYQMVKDLRTNYEVGNTSSIFDGEIDSFLEAGIRWRKQGES.

At Gln250 the chain carries N5-methylglutamine.

Belongs to the prokaryotic/mitochondrial release factor family. In terms of processing, methylated by PrmC. Methylation increases the termination efficiency of RF2.

It localises to the cytoplasm. Peptide chain release factor 2 directs the termination of translation in response to the peptide chain termination codons UGA and UAA. The polypeptide is Peptide chain release factor 2 (Kineococcus radiotolerans (strain ATCC BAA-149 / DSM 14245 / SRS30216)).